A 141-amino-acid chain; its full sequence is VLSASDKSNVKAAFGKIGGQAGDLGGQALERMFITYPQTKTYFPHFDLSHGSAQIKGHGKKVAEALVEAANHIDDIAGALSKLSDLHAQKLRVDPVNFKLLGHCFLVVVAAHFPSLLTPEVHASLDKFVLAVGTVLTAKYR.

The Globin domain maps to 1–141; it reads VLSASDKSNV…VGTVLTAKYR (141 aa). Position 58 (H58) interacts with O2. H87 provides a ligand contact to heme b.

It belongs to the globin family. Heterotetramer of two alpha chains and two beta chains. Red blood cells.

Functionally, involved in oxygen transport from the lung to the various peripheral tissues. The polypeptide is Hemoglobin subunit alpha-A (HBAA) (Streptopelia orientalis (Eastern turtle dove)).